Reading from the N-terminus, the 95-residue chain is Large ribosomal subunit protein uL23 (95 aa).

The protein belongs to the universal ribosomal protein uL23 family. Part of the 50S ribosomal subunit. Contacts protein L29, and trigger factor when it is bound to the ribosome.

Its function is as follows. One of the early assembly proteins it binds 23S rRNA. One of the proteins that surrounds the polypeptide exit tunnel on the outside of the ribosome. Forms the main docking site for trigger factor binding to the ribosome. The sequence is that of Large ribosomal subunit protein uL23 from Desulforapulum autotrophicum (strain ATCC 43914 / DSM 3382 / VKM B-1955 / HRM2) (Desulfobacterium autotrophicum).